Here is a 718-residue protein sequence, read N- to C-terminus: Manganese-exporting P-type ATPase (718 aa).

The HMA domain occupies 11 to 78 (GRMRVKVDWV…AIKGAAHVAA (68 aa)). A run of 6 helical transmembrane segments spans residues 87 to 105 (HSAEIRNTDVLRMVIGGVA), 128 to 146 (TVATGVTIFTGYPFLRGAL), 154 to 168 (AGTDALVSAATVASL), 177 to 191 (LTVLWLLNIGEYLQD), 327 to 351 (VGENFSRRFVPTSFIVSAIALLITG), and 357 to 375 (MTMLLIACPCAVGLSTPTA). The active-site 4-aspartylphosphate intermediate is the Asp408. Asp408, Thr410, and Asp610 together coordinate Mg(2+). Transmembrane regions (helical) follow at residues 661 to 680 (AVDVIRQNYGMSIAVNAAGL) and 690 to 709 (PVLAAILHNASSVAVVANSS).

The protein belongs to the cation transport ATPase (P-type) (TC 3.A.3) family. Type IB subfamily.

The protein localises to the cell membrane. The catalysed reaction is Mn(2+)(in) + ATP + H2O = Mn(2+)(out) + ADP + phosphate + H(+). Functionally, high affinity, slow turnover Mn(2+) transporting ATPase. The sequence is that of Manganese-exporting P-type ATPase (ctpC) from Mycobacterium bovis (strain ATCC BAA-935 / AF2122/97).